The primary structure comprises 500 residues: Endothelial lipase (500 aa).

A signal peptide spans 1 to 20 (MSNSVPLLCFWSLCYCFAAG). An intrachain disulfide couples Cys-64 to Cys-77. 2 N-linked (GlcNAc...) asparagine glycosylation sites follow: Asn-80 and Asn-136. The Nucleophile role is filled by Ser-169. Asp-193 (charge relay system) is an active-site residue. Cys-252 and Cys-272 form a disulfide bridge. Residue His-274 is the Charge relay system of the active site. 2 disulfides stabilise this stretch: Cys-297/Cys-316 and Cys-308/Cys-311. Heparin is bound at residue 325–337 (KMRNKRNSKMYLK). In terms of domain architecture, PLAT spans 347 to 482 (YHYQMKIHVF…SPGRELWFRK (136 aa)). N-linked (GlcNAc...) asparagine glycans are attached at residues Asn-393, Asn-469, and Asn-491. Cys-463 and Cys-483 are disulfide-bonded.

The protein belongs to the AB hydrolase superfamily. Lipase family. As to quaternary structure, head to tail homodimer. In terms of tissue distribution, high level of expression in the liver, placenta, lung, thyroid, kidney, testis and in the corpus luteum of the ovary. Expressed also in coronary artery endothelial cells, umbilical vein endothelial cells and in hepatocytes and osteosarcoma cell lines. Not detected in heart, brain and muscle.

It is found in the secreted. It catalyses the reaction a triacylglycerol + H2O = a diacylglycerol + a fatty acid + H(+). It carries out the reaction a 1,2-diacyl-sn-glycero-3-phosphocholine + H2O = a 2-acyl-sn-glycero-3-phosphocholine + a fatty acid + H(+). The enzyme catalyses 1,2,3-tri-(9Z-octadecenoyl)-glycerol + H2O = di-(9Z)-octadecenoylglycerol + (9Z)-octadecenoate + H(+). The catalysed reaction is 1,2,3-tributanoylglycerol + H2O = dibutanoylglycerol + butanoate + H(+). It catalyses the reaction 1,2-dihexadecanoyl-sn-glycero-3-phosphocholine + H2O = hexadecanoyl-sn-glycero-3-phosphocholine + hexadecanoate + H(+). Inhibited by serum and NaCl. Functionally, exerts both phospholipase and triglyceride lipase activities. More active as a phospholipase than a triglyceride lipase. Hydrolyzes triglycerides, both with short-chain fatty acyl groups (tributyrin) and long-chain fatty acyl groups (triolein) with similar levels of activity toward both types of substrates. Hydrolyzes high density lipoproteins (HDL) more efficiently than other lipoproteins. This chain is Endothelial lipase (LIPG), found in Homo sapiens (Human).